The sequence spans 475 residues: Kynureninase (475 aa).

Pyridoxal 5'-phosphate is bound by residues Leu-142, Thr-143, 170–173 (FPSD), Asp-255, His-258, and Tyr-280. The residue at position 281 (Lys-281) is an N6-(pyridoxal phosphate)lysine. The pyridoxal 5'-phosphate site is built by Trp-320 and Asn-348.

This sequence belongs to the kynureninase family. In terms of assembly, homodimer. Pyridoxal 5'-phosphate serves as cofactor.

It localises to the cytoplasm. The catalysed reaction is L-kynurenine + H2O = anthranilate + L-alanine + H(+). It carries out the reaction 3-hydroxy-L-kynurenine + H2O = 3-hydroxyanthranilate + L-alanine + H(+). It functions in the pathway amino-acid degradation; L-kynurenine degradation; L-alanine and anthranilate from L-kynurenine: step 1/1. Its pathway is cofactor biosynthesis; NAD(+) biosynthesis; quinolinate from L-kynurenine: step 2/3. In terms of biological role, catalyzes the cleavage of L-kynurenine (L-Kyn) and L-3-hydroxykynurenine (L-3OHKyn) into anthranilic acid (AA) and 3-hydroxyanthranilic acid (3-OHAA), respectively. The polypeptide is Kynureninase (bna5) (Botryotinia fuckeliana (strain B05.10) (Noble rot fungus)).